A 1049-amino-acid chain; its full sequence is Cellulose synthase A catalytic subunit 4 [UDP-forming] (1049 aa).

Topologically, residues 1–215 (MEPNTMASFD…ISSSKISPYR (215 aa)) are cytoplasmic. Cys-23, Cys-26, Cys-42, Cys-45, Cys-50, Cys-53, Cys-65, and Cys-68 together coordinate Zn(2+). Residues 23–69 (CKVCGDEVKDDDNGQTFVACHVCVYPVCKPCYEYERSNGNKCCPQCN) form an RING-type; degenerate zinc finger. The disordered stretch occupies residues 76–98 (KGSPKIAGDEENNGPDDSDDELN). Residues 84–96 (DEENNGPDDSDDE) are compositionally biased toward acidic residues. Ser-135 carries the post-translational modification Phosphoserine. The chain crosses the membrane as a helical span at residues 216 to 236 (IVIVLRLVILVFFFRFRILTP). The Extracellular portion of the chain corresponds to 237 to 239 (AKD). The chain crosses the membrane as a helical span at residues 240-260 (AYPLWLISVICEIWFALSWIL). The Cytoplasmic portion of the chain corresponds to 261–831 (DQFPKWFPIN…INTIVYPFTS (571 aa)). Residues Ser-299, Lys-305, Glu-306, and Asp-335 each contribute to the UDP-alpha-D-glucose site. Asp-335 is a catalytic residue. Residues 389–416 (VKDRRAMKREYEEFKVRINALVAKAQKK) adopt a coiled-coil conformation. Position 476 (Lys-476) interacts with UDP-alpha-D-glucose. Mn(2+)-binding residues include Lys-477 and Asp-501. Asp-748 is a catalytic residue. The helical transmembrane segment at 832–852 (IPLLAYCTIPAVCLLTGKFII) threads the bilayer. Over 853–857 (PTINN) the chain is Extracellular. A helical transmembrane segment spans residues 858 to 878 (FASIWFLALFLSIIATAILEL). At 879-895 (RWSGVSINDLWRNEQFW) the chain is on the cytoplasmic side. The helical transmembrane segment at 896–916 (VIGGVSAHLFAVFQGLLKVLF) threads the bilayer. Over 917–945 (GVDTNFTVTSKGASDEADEFGDLYLFKWT) the chain is Extracellular. The N-linked (GlcNAc...) asparagine glycan is linked to Asn-921. A helical membrane pass occupies residues 946–966 (TLLIPPTTLIILNMVGVVAGV). Topologically, residues 967-977 (SDAINNGYGSW) are cytoplasmic. The helical transmembrane segment at 978–998 (GPLFGKLFFAFWVIVHLYPFL) threads the bilayer. Topologically, residues 999–1007 (KGLMGRQNR) are extracellular. Residues 1008-1028 (TPTIVVLWSILLASIFSLVWV) form a helical membrane-spanning segment. The Cytoplasmic portion of the chain corresponds to 1029 to 1049 (RIDPFLPKQTGPLLKQCGVDC).

It belongs to the glycosyltransferase 2 family. Plant cellulose synthase subfamily. In terms of assembly, interacts with CESA7 and CESA8. Assembly with CESA7 and CESA8 is required for functional complex and localization in secondary cell wall deposition sites. Interacts with STL1 and STL2, but not with GOT1. Requires Zn(2+) as cofactor. Mn(2+) is required as a cofactor. In terms of processing, S-acylated. As to expression, confined to secondary cell wall developing tissues such as xylems and interfascicular regions. Expressed in roots, hypocotyls, leaves, inflorescences and flowers.

The protein resides in the cell membrane. The catalysed reaction is [(1-&gt;4)-beta-D-glucosyl](n) + UDP-alpha-D-glucose = [(1-&gt;4)-beta-D-glucosyl](n+1) + UDP + H(+). The protein operates within glycan metabolism; plant cellulose biosynthesis. Catalytic subunit of cellulose synthase terminal complexes ('rosettes'), required for beta-1,4-glucan microfibril crystallization, a major mechanism of the cell wall formation. Involved in the secondary cell wall formation. Required for the xylem cell wall thickening. The sequence is that of Cellulose synthase A catalytic subunit 4 [UDP-forming] from Arabidopsis thaliana (Mouse-ear cress).